A 182-amino-acid polypeptide reads, in one-letter code: Methyl-coenzyme M reductase operon protein C (182 aa).

As to quaternary structure, MCR is composed of three subunits: alpha, beta, and gamma. The function of proteins C and D is not known.

This Methanococcus voltae protein is Methyl-coenzyme M reductase operon protein C (mcrC).